The following is a 385-amino-acid chain: UPF0744 protein YSC83 (385 aa).

The protein belongs to the UPF0744 family.

Its subcellular location is the mitochondrion outer membrane. This Saccharomyces cerevisiae (strain ATCC 204508 / S288c) (Baker's yeast) protein is UPF0744 protein YSC83 (YSC83).